Here is a 298-residue protein sequence, read N- to C-terminus: MSASNVSLLHETSRQVAAGGSAGLVEICLMHPLDVVKTRFQVQRSVTDPQSYRTVRGSFQMIFRTEGLFGFYKGIIPPILAETPKRAVKFSTFELYKKFLGYMSLSPGLTFLIAGLGSGLTEAVVVNPFEVVKVGLQVNRNLFKEQPSTFAYARQIIKKEGLGFQGLNKGLTATLGRHGIFNMVYFGFYHNVKNIIPSSKDPTLEFLRKFGIGFVSGTMGSVFNIPFDVAKSRIQGPQPVPGEIKYRSCFKTMEMIYREEGILALYKGLVPKVMRLGPGGGVMLLVYEYTYAWLQENW.

3 Solcar repeats span residues 10–99 (HETS…YKKF), 106–195 (SPGL…VKNI), and 204–293 (LEFL…TYAW). A run of 6 helical transmembrane segments spans residues 16-36 (VAAG…LDVV), 69-88 (FGFY…KRAV), 112-132 (LIAG…FEVV), 166-186 (GLNK…MVYF), 204-224 (LEFL…SVFN), and 276-296 (LGPG…WLQE).

This sequence belongs to the mitochondrial carrier (TC 2.A.29) family.

The protein localises to the mitochondrion inner membrane. The catalysed reaction is 2-oxoadipate(in) + 2-oxoglutarate(out) = 2-oxoadipate(out) + 2-oxoglutarate(in). It carries out the reaction hexanedioate(in) + 2-oxoglutarate(out) = hexanedioate(out) + 2-oxoglutarate(in). The enzyme catalyses L-2-aminoadipate(in) + 2-oxoglutarate(out) = L-2-aminoadipate(out) + 2-oxoglutarate(in). It catalyses the reaction glutarate(in) + 2-oxoglutarate(out) = glutarate(out) + 2-oxoglutarate(in). The catalysed reaction is 2-oxoheptanedioate(in) + 2-oxoglutarate(out) = 2-oxoheptanedioate(out) + 2-oxoglutarate(in). It carries out the reaction heptanedioate(in) + 2-oxoglutarate(out) = heptanedioate(out) + 2-oxoglutarate(in). The enzyme catalyses citrate(in) + 2-oxoglutarate(out) = citrate(out) + 2-oxoglutarate(in). In terms of biological role, transports dicarboxylates across the inner membranes of mitochondria by a counter-exchange mechanism. Can transport 2-oxoadipate (2-oxohexanedioate), 2-oxoglutarate, adipate (hexanedioate), glutarate, and to a lesser extent, pimelate (heptanedioate), 2-oxopimelate (2-oxoheptanedioate), 2-aminoadipate (2-aminohexanedioate), oxaloacetate, and citrate. Plays a central role in catabolism of lysine, hydroxylysine, and tryptophan, by transporting common metabolite intermediates (such as 2-oxoadipate) into the mitochondria, where it is converted into acetyl-CoA and can enter the citric acid (TCA) cycle. The polypeptide is Mitochondrial 2-oxodicarboxylate carrier (Slc25a21) (Mus musculus (Mouse)).